We begin with the raw amino-acid sequence, 144 residues long: Nucleoside diphosphate kinase (144 aa).

ATP-binding residues include lysine 9, phenylalanine 57, arginine 85, threonine 91, arginine 102, and asparagine 112. Catalysis depends on histidine 115, which acts as the Pros-phosphohistidine intermediate.

It belongs to the NDK family. As to quaternary structure, homotetramer. The cofactor is Mg(2+).

It is found in the cytoplasm. It catalyses the reaction a 2'-deoxyribonucleoside 5'-diphosphate + ATP = a 2'-deoxyribonucleoside 5'-triphosphate + ADP. The enzyme catalyses a ribonucleoside 5'-diphosphate + ATP = a ribonucleoside 5'-triphosphate + ADP. Its function is as follows. Major role in the synthesis of nucleoside triphosphates other than ATP. The ATP gamma phosphate is transferred to the NDP beta phosphate via a ping-pong mechanism, using a phosphorylated active-site intermediate. This chain is Nucleoside diphosphate kinase, found in Chlamydia pneumoniae (Chlamydophila pneumoniae).